A 287-amino-acid chain; its full sequence is Zinc transporter ZIP9 (287 aa).

A helical membrane pass occupies residues 4-24 (FLSISLLSLAMLVGCYVAGII). N29 carries N-linked (GlcNAc...) asparagine glycosylation. 5 helical membrane passes run 35–55 (LKLV…AVIV), 107–127 (AYIG…DQIG), 147–167 (ITTT…LGAA), 177–197 (LIVF…LVSF), and 211–231 (HLLV…LGLS). N242 is a glycosylation site (N-linked (GlcNAc...) asparagine). The chain crosses the membrane as a helical span at residues 245 to 265 (GVAMLFSAGTFLYVATVHVLP). The segment at 268 to 287 (TSTNQSGSSLSPRPLPSGKN) is disordered. N-linked (GlcNAc...) asparagine glycosylation is present at N271. The segment covering 273 to 287 (SGSSLSPRPLPSGKN) has biased composition (low complexity).

This sequence belongs to the ZIP transporter (TC 2.A.5) family.

Its subcellular location is the golgi apparatus. The protein localises to the trans-Golgi network membrane. It localises to the cell membrane. It is found in the cytoplasm. The protein resides in the perinuclear region. Its subcellular location is the mitochondrion. The protein localises to the nucleus. It catalyses the reaction Zn(2+)(in) = Zn(2+)(out). Functionally, transports zinc ions across cell and organelle membranes into the cytoplasm and regulates intracellular zinc homeostasis. Participates in the zinc ions efflux out of the secretory compartments. Regulates intracellular zinc level, resulting in the enhancement of AKT1 and MAPK3/MAPK1 (Erk1/2) phosphorylation in response to the BCR activation. Also functions as a membrane androgen receptor that mediates, through a G protein, the non-classical androgen signaling pathway, characterized by the activation of MAPK3/MAPK1 (Erk1/2) and transcription factors CREB1 or ATF1. This pathway contributes to CLDN1 and CLDN5 expression and tight junction formation between adjacent Sertoli cells. Mediates androgen-induced vascular endothelial cell proliferation through activation of an inhibitory G protein leading to the AKT1 and MAPK3/MAPK1 (Erk1/2) activation which in turn modulate inhibition (phosphorylation) of GSK3B and CCND1 transcription. Moreover, has dual functions as a membrane-bound androgen receptor and as an androgen-dependent zinc transporter both of which are mediated through an inhibitory G protein (Gi) that mediates both MAP kinase and zinc signaling leading to the androgen-dependent apoptotic process. This chain is Zinc transporter ZIP9, found in Rattus norvegicus (Rat).